The primary structure comprises 348 residues: GTPase Obg (348 aa).

Residues 1–159 enclose the Obg domain; sequence MKFVDEVKVH…RELVLELKLM (159 aa). One can recognise an OBG-type G domain in the interval 160–331; that stretch reads ADVGLVGLPN…LLSALVRILS (172 aa). Residues 166–173, 191–195, 213–216, 283–286, and 312–314 contribute to the GTP site; these read GLPNAGKS, FTTLI, DIPG, NKVD, and SAR. Residues Ser173 and Thr193 each coordinate Mg(2+).

It belongs to the TRAFAC class OBG-HflX-like GTPase superfamily. OBG GTPase family. As to quaternary structure, monomer. The cofactor is Mg(2+).

It localises to the cytoplasm. In terms of biological role, an essential GTPase which binds GTP, GDP and possibly (p)ppGpp with moderate affinity, with high nucleotide exchange rates and a fairly low GTP hydrolysis rate. Plays a role in control of the cell cycle, stress response, ribosome biogenesis and in those bacteria that undergo differentiation, in morphogenesis control. In Syntrophobacter fumaroxidans (strain DSM 10017 / MPOB), this protein is GTPase Obg.